Reading from the N-terminus, the 105-residue chain is Large ribosomal subunit protein bL21 (105 aa).

The protein belongs to the bacterial ribosomal protein bL21 family. In terms of assembly, part of the 50S ribosomal subunit. Contacts protein L20.

In terms of biological role, this protein binds to 23S rRNA in the presence of protein L20. In Blochmanniella pennsylvanica (strain BPEN), this protein is Large ribosomal subunit protein bL21.